The chain runs to 106 residues: ATP-dependent Clp protease adapter protein ClpS (106 aa).

A compositionally biased stretch (basic and acidic residues) spans 1-10 (MSQKTVHDQD). Residues 1–23 (MSQKTVHDQDNALLLETGNTKVA) are disordered.

Belongs to the ClpS family. Binds to the N-terminal domain of the chaperone ClpA.

Functionally, involved in the modulation of the specificity of the ClpAP-mediated ATP-dependent protein degradation. This is ATP-dependent Clp protease adapter protein ClpS from Xylella fastidiosa (strain M23).